A 264-amino-acid polypeptide reads, in one-letter code: Thiazole synthase (264 aa).

Lys-98 (schiff-base intermediate with DXP) is an active-site residue. Residues Gly-159, 185–186 (AG), and 207–208 (AS) each bind 1-deoxy-D-xylulose 5-phosphate. A disordered region spans residues 243–264 (HFAEASSPPEGRAHLDPERPAF). The span at 253-264 (GRAHLDPERPAF) shows a compositional bias: basic and acidic residues.

It belongs to the ThiG family. Homotetramer. Forms heterodimers with either ThiH or ThiS.

The protein resides in the cytoplasm. The enzyme catalyses [ThiS sulfur-carrier protein]-C-terminal-Gly-aminoethanethioate + 2-iminoacetate + 1-deoxy-D-xylulose 5-phosphate = [ThiS sulfur-carrier protein]-C-terminal Gly-Gly + 2-[(2R,5Z)-2-carboxy-4-methylthiazol-5(2H)-ylidene]ethyl phosphate + 2 H2O + H(+). It participates in cofactor biosynthesis; thiamine diphosphate biosynthesis. Functionally, catalyzes the rearrangement of 1-deoxy-D-xylulose 5-phosphate (DXP) to produce the thiazole phosphate moiety of thiamine. Sulfur is provided by the thiocarboxylate moiety of the carrier protein ThiS. In vitro, sulfur can be provided by H(2)S. The sequence is that of Thiazole synthase from Streptomyces avermitilis (strain ATCC 31267 / DSM 46492 / JCM 5070 / NBRC 14893 / NCIMB 12804 / NRRL 8165 / MA-4680).